The following is a 218-amino-acid chain: N-(5'-phosphoribosyl)anthranilate isomerase (218 aa).

The protein belongs to the TrpF family.

The catalysed reaction is N-(5-phospho-beta-D-ribosyl)anthranilate = 1-(2-carboxyphenylamino)-1-deoxy-D-ribulose 5-phosphate. The protein operates within amino-acid biosynthesis; L-tryptophan biosynthesis; L-tryptophan from chorismate: step 3/5. The chain is N-(5'-phosphoribosyl)anthranilate isomerase from Acetivibrio thermocellus (strain ATCC 27405 / DSM 1237 / JCM 9322 / NBRC 103400 / NCIMB 10682 / NRRL B-4536 / VPI 7372) (Clostridium thermocellum).